A 380-amino-acid chain; its full sequence is Alpha-glucoside transport system permease protein AglG (380 aa).

The next 6 helical transmembrane spans lie at 13 to 33 (VHLS…GLLI), 179 to 199 (VIPI…PFPG), 202 to 222 (VLLA…LIPL), 239 to 259 (TYMG…IYLL), 288 to 308 (IILP…FLWT), and 344 to 364 (EILT…FFAL). One can recognise an ABC transmembrane type-1 domain in the interval 167–364 (FLNSLTVAVP…VVPLIVFFAL (198 aa)).

The protein belongs to the binding-protein-dependent transport system permease family. MalFG subfamily.

The protein resides in the cell inner membrane. Part of the binding-protein-dependent transport system for alpha-glucosides such as sucrose, maltose and trehalose. Probably responsible for the translocation of the substrate across the membrane. This is Alpha-glucoside transport system permease protein AglG (aglG) from Rhizobium meliloti (strain 1021) (Ensifer meliloti).